Reading from the N-terminus, the 416-residue chain is Chorismate synthase (416 aa).

NADP(+) is bound by residues Arg40 and Arg46. Residues 135–137, 256–257, Gly300, 315–319, and Arg341 each bind FMN; these read RAS, QA, and KPIAT.

The protein belongs to the chorismate synthase family. Homotetramer. FMNH2 is required as a cofactor.

The catalysed reaction is 5-O-(1-carboxyvinyl)-3-phosphoshikimate = chorismate + phosphate. It participates in metabolic intermediate biosynthesis; chorismate biosynthesis; chorismate from D-erythrose 4-phosphate and phosphoenolpyruvate: step 7/7. Functionally, catalyzes the anti-1,4-elimination of the C-3 phosphate and the C-6 proR hydrogen from 5-enolpyruvylshikimate-3-phosphate (EPSP) to yield chorismate, which is the branch point compound that serves as the starting substrate for the three terminal pathways of aromatic amino acid biosynthesis. This reaction introduces a second double bond into the aromatic ring system. This chain is Chorismate synthase, found in Kocuria rhizophila (strain ATCC 9341 / DSM 348 / NBRC 103217 / DC2201).